The following is a 155-amino-acid chain: 6,7-dimethyl-8-ribityllumazine synthase (155 aa).

5-amino-6-(D-ribitylamino)uracil-binding positions include phenylalanine 22, 57-59 (AVE), and 81-83 (TVI). 86 to 87 (GT) is a (2S)-2-hydroxy-3-oxobutyl phosphate binding site. Histidine 89 serves as the catalytic Proton donor. 5-amino-6-(D-ribitylamino)uracil is bound at residue phenylalanine 114. Arginine 128 is a binding site for (2S)-2-hydroxy-3-oxobutyl phosphate.

This sequence belongs to the DMRL synthase family. As to quaternary structure, forms an icosahedral capsid composed of 60 subunits, arranged as a dodecamer of pentamers.

The catalysed reaction is (2S)-2-hydroxy-3-oxobutyl phosphate + 5-amino-6-(D-ribitylamino)uracil = 6,7-dimethyl-8-(1-D-ribityl)lumazine + phosphate + 2 H2O + H(+). It participates in cofactor biosynthesis; riboflavin biosynthesis; riboflavin from 2-hydroxy-3-oxobutyl phosphate and 5-amino-6-(D-ribitylamino)uracil: step 1/2. Functionally, catalyzes the formation of 6,7-dimethyl-8-ribityllumazine by condensation of 5-amino-6-(D-ribitylamino)uracil with 3,4-dihydroxy-2-butanone 4-phosphate. This is the penultimate step in the biosynthesis of riboflavin. This chain is 6,7-dimethyl-8-ribityllumazine synthase, found in Psychromonas ingrahamii (strain DSM 17664 / CCUG 51855 / 37).